Here is a 443-residue protein sequence, read N- to C-terminus: Amino-acid acetyltransferase (443 aa).

The N-acetyltransferase domain occupies 296 to 434 (EQIRRATIND…KKLMYNYQRR (139 aa)).

The protein belongs to the acetyltransferase family. ArgA subfamily. Homohexamer.

The protein localises to the cytoplasm. It carries out the reaction L-glutamate + acetyl-CoA = N-acetyl-L-glutamate + CoA + H(+). It participates in amino-acid biosynthesis; L-arginine biosynthesis; N(2)-acetyl-L-ornithine from L-glutamate: step 1/4. The polypeptide is Amino-acid acetyltransferase (Escherichia fergusonii (strain ATCC 35469 / DSM 13698 / CCUG 18766 / IAM 14443 / JCM 21226 / LMG 7866 / NBRC 102419 / NCTC 12128 / CDC 0568-73)).